The following is a 227-amino-acid chain: Orotidine 5'-phosphate decarboxylase (227 aa).

Substrate-binding positions include Asp-12, Lys-34, 61–70 (DLKLHDIPNT), Thr-117, Arg-178, Gln-187, Gly-207, and Arg-208. The Proton donor role is filled by Lys-63.

Belongs to the OMP decarboxylase family. Type 1 subfamily. As to quaternary structure, homodimer.

It carries out the reaction orotidine 5'-phosphate + H(+) = UMP + CO2. It participates in pyrimidine metabolism; UMP biosynthesis via de novo pathway; UMP from orotate: step 2/2. In terms of biological role, catalyzes the decarboxylation of orotidine 5'-monophosphate (OMP) to uridine 5'-monophosphate (UMP). The sequence is that of Orotidine 5'-phosphate decarboxylase from Anaeromyxobacter dehalogenans (strain 2CP-1 / ATCC BAA-258).